We begin with the raw amino-acid sequence, 163 residues long: Staphylokinase (163 aa).

Positions 1–27 are cleaved as a signal peptide; the sequence is MLKRGLLFLTVLLLLFSFSSITNEVSA.

The protein belongs to the staphylokinase family.

The protein localises to the secreted. Its function is as follows. Potent plasminogen activator that converts plasminogen into plasmin. It forms a 1:1 complex with plasmin, which in turn activates other plasminogen molecules. The sequence is that of Staphylokinase (sak) from Staphylococcus aureus (strain MRSA252).